The sequence spans 476 residues: Siroheme synthase (476 aa).

The precorrin-2 dehydrogenase /sirohydrochlorin ferrochelatase stretch occupies residues Met-1–Leu-203. NAD(+) contacts are provided by residues Gly-22 to Val-23 and Gln-43 to Lys-44. Ser-128 is subject to Phosphoserine. The uroporphyrinogen-III C-methyltransferase stretch occupies residues Gly-214–Ala-476. Residue Pro-223 coordinates S-adenosyl-L-methionine. Asp-246 acts as the Proton acceptor in catalysis. Residue Lys-268 is the Proton donor of the active site. S-adenosyl-L-methionine-binding positions include Gly-299 to Asp-301, Val-304, Thr-329 to Ala-330, Met-381, and Gly-410.

In the N-terminal section; belongs to the precorrin-2 dehydrogenase / sirohydrochlorin ferrochelatase family. It in the C-terminal section; belongs to the precorrin methyltransferase family.

It carries out the reaction uroporphyrinogen III + 2 S-adenosyl-L-methionine = precorrin-2 + 2 S-adenosyl-L-homocysteine + H(+). It catalyses the reaction precorrin-2 + NAD(+) = sirohydrochlorin + NADH + 2 H(+). The enzyme catalyses siroheme + 2 H(+) = sirohydrochlorin + Fe(2+). It participates in cofactor biosynthesis; adenosylcobalamin biosynthesis; precorrin-2 from uroporphyrinogen III: step 1/1. The protein operates within cofactor biosynthesis; adenosylcobalamin biosynthesis; sirohydrochlorin from precorrin-2: step 1/1. It functions in the pathway porphyrin-containing compound metabolism; siroheme biosynthesis; precorrin-2 from uroporphyrinogen III: step 1/1. Its pathway is porphyrin-containing compound metabolism; siroheme biosynthesis; siroheme from sirohydrochlorin: step 1/1. It participates in porphyrin-containing compound metabolism; siroheme biosynthesis; sirohydrochlorin from precorrin-2: step 1/1. Multifunctional enzyme that catalyzes the SAM-dependent methylations of uroporphyrinogen III at position C-2 and C-7 to form precorrin-2 via precorrin-1. Then it catalyzes the NAD-dependent ring dehydrogenation of precorrin-2 to yield sirohydrochlorin. Finally, it catalyzes the ferrochelation of sirohydrochlorin to yield siroheme. The polypeptide is Siroheme synthase (Actinobacillus succinogenes (strain ATCC 55618 / DSM 22257 / CCUG 43843 / 130Z)).